We begin with the raw amino-acid sequence, 348 residues long: Phosphate acyltransferase (348 aa).

The protein belongs to the PlsX family. As to quaternary structure, homodimer. Probably interacts with PlsY.

It is found in the cytoplasm. The enzyme catalyses a fatty acyl-[ACP] + phosphate = an acyl phosphate + holo-[ACP]. The protein operates within lipid metabolism; phospholipid metabolism. In terms of biological role, catalyzes the reversible formation of acyl-phosphate (acyl-PO(4)) from acyl-[acyl-carrier-protein] (acyl-ACP). This enzyme utilizes acyl-ACP as fatty acyl donor, but not acyl-CoA. This Pectobacterium atrosepticum (strain SCRI 1043 / ATCC BAA-672) (Erwinia carotovora subsp. atroseptica) protein is Phosphate acyltransferase.